A 757-amino-acid polypeptide reads, in one-letter code: Relaxin receptor 1 (757 aa).

Residues 1–409 are Extracellular-facing; sequence MTSGSVFFYI…ENLLASIIQR (409 aa). An LDL-receptor class A domain is found at 26–63; that stretch reads KCSLGYFPCGNITKCLPQLLHCNGVDDCGNQADEDNCG. Disulfide bonds link Cys-27–Cys-40, Cys-34–Cys-53, and Cys-47–Cys-62. Asn-36 carries N-linked (GlcNAc...) asparagine glycosylation. The Ca(2+) site is built by Leu-45, Asn-48, Val-50, Asp-52, Asp-58, and Glu-59. Residues 91-127 enclose the LRRNT domain; sequence ETPECLVGSVPVQCLCQGLELDCDETNLRAVPSVSSN. The N-linked (GlcNAc...) asparagine glycan is linked to Asn-127. 9 LRR repeats span residues 151-172, 175-196, 199-220, 223-244, 248-269, 272-293, 296-317, 320-341, and 344-365; these read DLQK…AFRG, SLTK…VFED, RLEW…TFYG, SLIL…PLCQ, RLHW…TFIS, NLTV…TFAP, KLDE…IFKD, ELSQ…QFDY, and KLKS…MFRP. N-linked (GlcNAc...) asparagine glycans are attached at residues Asn-264 and Asn-272. N-linked (GlcNAc...) asparagine glycosylation occurs at Asn-325. Asn-368 carries N-linked (GlcNAc...) asparagine glycosylation. The helical transmembrane segment at 410–430 threads the bilayer; that stretch reads VFVWVVSAVTCFGNIFVICMR. The Cytoplasmic segment spans residues 431 to 443; it reads PYIRSENKLYAMS. The helical transmembrane segment at 444 to 464 threads the bilayer; the sequence is IISLCCADCLMGIYLFVIGGF. Residues 465 to 486 lie on the Extracellular side of the membrane; it reads DLKFRGEYNKHAQLWMESTHCQ. A disulfide bridge links Cys-485 with Cys-563. A helical membrane pass occupies residues 487-507; the sequence is LVGSLAILSTEVSVLLLTFLT. At 508-527 the chain is on the cytoplasmic side; that stretch reads LEKYICIVYPFRCVRPGKCR. The chain crosses the membrane as a helical span at residues 528–548; it reads TITVLILIWITGFIVAFIPLS. Residues 549–577 are Extracellular-facing; the sequence is NKEFFKNYYGTNGVCFPLHSEDTESIGAQ. The chain crosses the membrane as a helical span at residues 578 to 598; sequence IYSVAIFLGINLAAFIIIVFS. Residues 599–629 lie on the Cytoplasmic side of the membrane; the sequence is YGSMFYSVHQSAITATEIRNQVKKEMILAKR. The chain crosses the membrane as a helical span at residues 630–650; the sequence is FFFIVFTDALCWIPIFVVKFL. A topological domain (extracellular) is located at residue Ser-651. The helical transmembrane segment at 652–672 threads the bilayer; sequence LLQVEIPGTITSWVVIFILPI. Residues 673–757 are Cytoplasmic-facing; the sequence is NSALNPILYT…SQSTRLNSYS (85 aa).

Belongs to the G-protein coupled receptor 1 family. In terms of assembly, interacts with C1QTNF8. In terms of tissue distribution, expressed in the brain, kidney, testis, placenta, uterus, ovary, adrenal, prostate, skin and heart. Not detected in spleen.

It localises to the cell membrane. In terms of biological role, receptor for relaxins. The activity of this receptor is mediated by G proteins leading to stimulation of adenylate cyclase and an increase of cAMP. Binding of the ligand may also activate a tyrosine kinase pathway that inhibits the activity of a phosphodiesterase that degrades cAMP. The protein is Relaxin receptor 1 (RXFP1) of Homo sapiens (Human).